A 329-amino-acid polypeptide reads, in one-letter code: tRNA(Ile)-lysidine synthase (329 aa).

Residue serine 37 to serine 42 participates in ATP binding.

The protein belongs to the tRNA(Ile)-lysidine synthase family.

The protein resides in the cytoplasm. The enzyme catalyses cytidine(34) in tRNA(Ile2) + L-lysine + ATP = lysidine(34) in tRNA(Ile2) + AMP + diphosphate + H(+). Ligates lysine onto the cytidine present at position 34 of the AUA codon-specific tRNA(Ile) that contains the anticodon CAU, in an ATP-dependent manner. Cytidine is converted to lysidine, thus changing the amino acid specificity of the tRNA from methionine to isoleucine. In Zymomonas mobilis subsp. mobilis (strain ATCC 31821 / ZM4 / CP4), this protein is tRNA(Ile)-lysidine synthase.